Reading from the N-terminus, the 332-residue chain is MEQKYSLLSHNTFGIDVSAACFLEYASVDELRGLIGSGRVTSPYLHIGGGSNLLFTKDYEGTILHSRIGGVEVVAETDDDIVVRVGAGVVWDDFVDYCVQRHWHGVENLSLIPGEVGASAVQNIGAYGVEVKDLIVRVETLNIEGKEHVYDVTECGYSYRDSIFKRPENKSVFVTYVSFRLSKREHYTLDYGTIRRELEKYPGVTLDVVRRVIIAIREEKLPDPRVMGNAGSFFMNPIVGREQFEALQAEYPQMPFYEIDTDRVKIPAGWMIDQCGWKGKALGPAAVHDKQALVLVNRGGAKGADVIALSDAVRASVRAKFGIDIHPEVNFI.

In terms of domain architecture, FAD-binding PCMH-type spans 15–184 (IDVSAACFLE…TYVSFRLSKR (170 aa)). R160 is a catalytic residue. The active-site Proton donor is the S232. E328 is an active-site residue.

It belongs to the MurB family. It depends on FAD as a cofactor.

It is found in the cytoplasm. The enzyme catalyses UDP-N-acetyl-alpha-D-muramate + NADP(+) = UDP-N-acetyl-3-O-(1-carboxyvinyl)-alpha-D-glucosamine + NADPH + H(+). It functions in the pathway cell wall biogenesis; peptidoglycan biosynthesis. Functionally, cell wall formation. This chain is UDP-N-acetylenolpyruvoylglucosamine reductase, found in Bacteroides fragilis (strain ATCC 25285 / DSM 2151 / CCUG 4856 / JCM 11019 / LMG 10263 / NCTC 9343 / Onslow / VPI 2553 / EN-2).